The following is a 184-amino-acid chain: ATP synthase subunit b, chloroplastic (184 aa).

The helical transmembrane segment at 27 to 49 (LATNPINLSVVFGVLIFFGKGVL) threads the bilayer.

This sequence belongs to the ATPase B chain family. In terms of assembly, F-type ATPases have 2 components, F(1) - the catalytic core - and F(0) - the membrane proton channel. F(1) has five subunits: alpha(3), beta(3), gamma(1), delta(1), epsilon(1). F(0) has four main subunits: a(1), b(1), b'(1) and c(10-14). The alpha and beta chains form an alternating ring which encloses part of the gamma chain. F(1) is attached to F(0) by a central stalk formed by the gamma and epsilon chains, while a peripheral stalk is formed by the delta, b and b' chains.

It is found in the plastid. Its subcellular location is the chloroplast thylakoid membrane. Functionally, f(1)F(0) ATP synthase produces ATP from ADP in the presence of a proton or sodium gradient. F-type ATPases consist of two structural domains, F(1) containing the extramembraneous catalytic core and F(0) containing the membrane proton channel, linked together by a central stalk and a peripheral stalk. During catalysis, ATP synthesis in the catalytic domain of F(1) is coupled via a rotary mechanism of the central stalk subunits to proton translocation. Its function is as follows. Component of the F(0) channel, it forms part of the peripheral stalk, linking F(1) to F(0). This is ATP synthase subunit b, chloroplastic from Nasturtium officinale (Watercress).